A 757-amino-acid chain; its full sequence is Zinc finger CCCH domain-containing protein 5 (757 aa).

Positions 1 to 127 (MEQANEKEEE…REEEERRWKD (127 aa)) are disordered. The span at 13-35 (HEEAAGEKESFEESKEKAAEMSR) shows a compositional bias: basic and acidic residues. Basic residues predominate over residues 36-50 (KEKRKAMKKLKRKQV). Residues 51–127 (RKEIAAKERE…REEEERRWKD (77 aa)) show a composition bias toward basic and acidic residues. Residues 240-268 (EQDKAHCPFHLKTGACRFGQRCSRVHFYP) form a C3H1-type 1 zinc finger. The 78-residue stretch at 295–372 (YTDEEAELCY…KQVNCEFVNI (78 aa)) folds into the RRM domain. The segment at 374-404 (RWKVAICGEYMKSRLKTCSRGSACNFIHCFR) adopts a C3H1-type 2 zinc-finger fold. The interval 441-757 (HESSGSLNDS…EEEIERWRPV (317 aa)) is disordered. Residues 444-455 (SGSLNDSISDLS) are compositionally biased toward polar residues. The span at 487–546 (YHGDTQDSTREDKLRRHAENCHDGDDSPSRDGSLEREMYKERRYAKDTLHRDSRWSEHSP) shows a compositional bias: basic and acidic residues. Composition is skewed to basic residues over residues 547–557 (GHRVGRKRIHG) and 600–609 (KTHRSSRKHS). 3 stretches are compositionally biased toward basic and acidic residues: residues 610–634 (REGSSADKEEGHEHDRVHTVSDKSH), 644–672 (RSSSRYSHEEDSTESRHHQHKESDKKRSV), and 681–721 (SDKD…ETHK). Residues 722–733 (ERRHRHRKRRRT) are compositionally biased toward basic residues.

This is Zinc finger CCCH domain-containing protein 5 from Arabidopsis thaliana (Mouse-ear cress).